A 262-amino-acid chain; its full sequence is Acyl-[acyl-carrier-protein]--UDP-N-acetylglucosamine O-acyltransferase (262 aa).

This sequence belongs to the transferase hexapeptide repeat family. LpxA subfamily. As to quaternary structure, homotrimer.

It is found in the cytoplasm. The catalysed reaction is a (3R)-hydroxyacyl-[ACP] + UDP-N-acetyl-alpha-D-glucosamine = a UDP-3-O-[(3R)-3-hydroxyacyl]-N-acetyl-alpha-D-glucosamine + holo-[ACP]. Its pathway is glycolipid biosynthesis; lipid IV(A) biosynthesis; lipid IV(A) from (3R)-3-hydroxytetradecanoyl-[acyl-carrier-protein] and UDP-N-acetyl-alpha-D-glucosamine: step 1/6. Involved in the biosynthesis of lipid A, a phosphorylated glycolipid that anchors the lipopolysaccharide to the outer membrane of the cell. The sequence is that of Acyl-[acyl-carrier-protein]--UDP-N-acetylglucosamine O-acyltransferase from Salmonella heidelberg (strain SL476).